A 538-amino-acid polypeptide reads, in one-letter code: Protein NRT1/ PTR FAMILY 5.11 (538 aa).

Transmembrane regions (helical) follow at residues 44-64 (FAYFGIASNLIMYLTGPLGES) and 74-94 (AWTGTVAFLPLLGGFLADSYL). T99 bears the Phosphothreonine mark. The next 10 membrane-spanning stretches (helical) occupy residues 100-120 (IIISSSLYILGLGLLSFSTMI), 134-154 (TIFFFSLYLVAIGQGGYNPCI), 175-194 (SFFNWLMFGNCISILTTRLV), 204-224 (WSLGFGIPSVSMLLSLFLFLL), 308-328 (IPIWITSVVYTIVHAQSPTFF), 342-362 (GLLVPAATLQSFINLSVVVFI), 389-409 (IGTGIFLSILAMVLAALVETK), 424-444 (VWWLIPQYVIFGVSDMFTMVG), 463-483 (ALNLSIYGAGNYLSSFMISVI), and 507-527 (YFYWLLACLGFIGFAFYLWFA).

It belongs to the major facilitator superfamily. Proton-dependent oligopeptide transporter (POT/PTR) (TC 2.A.17) family. As to expression, expressed in shoots and roots.

The protein resides in the membrane. In Arabidopsis thaliana (Mouse-ear cress), this protein is Protein NRT1/ PTR FAMILY 5.11 (NPF5.11).